Reading from the N-terminus, the 172-residue chain is Small ribosomal subunit protein uS5 (172 aa).

An S5 DRBM domain is found at 17 to 80 (LREKMISVNR…EQARRNMFKV (64 aa)).

It belongs to the universal ribosomal protein uS5 family. In terms of assembly, part of the 30S ribosomal subunit. Contacts proteins S4 and S8.

Its function is as follows. With S4 and S12 plays an important role in translational accuracy. In terms of biological role, located at the back of the 30S subunit body where it stabilizes the conformation of the head with respect to the body. This Burkholderia orbicola (strain AU 1054) protein is Small ribosomal subunit protein uS5.